A 512-amino-acid chain; its full sequence is Acid-sensing ion channel 2 (512 aa).

Residues 1–37 (MDLKESPSEGSLQPSSIQIFANTSTLHGIRHIFVYGP) are Cytoplasmic-facing. 2 positions are modified to phosphoserine: S8 and S11. Residues 38–58 (LTIRRVLWAVAFVGSLGLLLV) traverse the membrane as a helical segment. Topologically, residues 59–427 (ESSERVSYYF…EQKKAYEVAA (369 aa)) are extracellular. 6 disulfides stabilise this stretch: C92/C193, C289/C364, C307/C360, C311/C358, C320/C342, and C322/C334. N-linked (GlcNAc...) asparagine glycosylation is found at N365 and N392. Residues 428-448 (LLGDIGGQMGLFIGASLLTIL) traverse the membrane as a helical segment. Residues 441 to 443 (GAS) carry the GAS motif; ion selectivity filter motif. At 449 to 512 (ELFDYIYELI…ALGTLEEIAC (64 aa)) the chain is on the cytoplasmic side.

This sequence belongs to the amiloride-sensitive sodium channel (TC 1.A.6) family. ASIC2 subfamily. In terms of assembly, can form homotrimers. Heterotrimer; forms functional heterotrimers producing channel with different properties. Forms heterotrimers with ASIC1; while ASIC1 determines current amplitude, ASIC2 influences the properties of the current. Forms heterotrimers with ASIC3; resulting in channels with distinct properties. Interacts with STOM; STOM regulates the gating of ASIC2-containing channels. Interacts with PICK1; promotes ASIC3 phosphorylation by PKC and activation of ASIC2/ASIC3 heterotrimers. As to expression, expressed in sciatic nerve and dorsal root ganglion (DRG) (at protein level). Both isoforms display the same expression pattern except in DRG where isoform 2 is more abundantly expressed. Widely distributed throughout the brain. Highly expressed in the main olfactory bulb, neo- and allo-cortical regions, hippocampal formation, habenula, basolateral amygdaloid nuclei, and cerebellum. In the olfactory system, expressed in the glomerular cell layer, the internal granular layer, and the mitral and internal plexiform cell layers. Within the glomerular layer, restricted to the periglomerular cells. In the neocortex, strongly expressed in the large pyramidal neurons in all cortical layers as well as in the oligo-, astro-, or micro-glia cells. In the hippocampal formation, expressed in dentate granule cells and hilar neurons, as well as in pyramidal cells of CA1-CA3 subfields. Expressed in stratum oriens and radiatum of all subfields. Within the thalamus, expressed moderately in the medial and lateral habenula. In the cerebellar cortex expressed in Purkinje cells and granule cells. Expressed at low levels in choroid plexus.

It localises to the cell membrane. It catalyses the reaction Na(+)(in) = Na(+)(out). The enzyme catalyses K(+)(in) = K(+)(out). It carries out the reaction Li(+)(in) = Li(+)(out). With respect to regulation, inhibited by the diuretic drug amiloride. Inhibited by gadolinium ions, the heterotrimer with ASIC3 being more sensitive. Zn(2+) potentiates the acid activation of ASIC2-containing homomeric and heteromeric channels. The snake venom mambalgin-1 and mambalgin-2 inhibit the homotrimers composed of ASIC1 and ASIC2 and have strong analgesic effects. Functionally, forms pH-gated trimeric sodium channels that act as postsynaptic excitatory sensors in the nervous system. Upon extracellular acidification, these channels generate rapid, transient inward currents that fully desensitize. Highly selective for sodium, they are permeable to other cations. By forming heterotrimeric channels with ASIC1, could contribute to synaptic plasticity, learning, and memory. Additionally, as acid sensors at nerve terminals, plays a role in mechanosensation and phototransduction. In terms of biological role, has no pH-gated sodium channel activity per se but can associate with other ASICs to produce functional channels with specific properties. This chain is Acid-sensing ion channel 2, found in Rattus norvegicus (Rat).